Here is a 294-residue protein sequence, read N- to C-terminus: UDP-3-O-acyl-N-acetylglucosamine deacetylase (294 aa).

Residues His75, His232, and Asp236 each contribute to the Zn(2+) site. The Proton donor role is filled by His259.

It belongs to the LpxC family. Requires Zn(2+) as cofactor.

The catalysed reaction is a UDP-3-O-[(3R)-3-hydroxyacyl]-N-acetyl-alpha-D-glucosamine + H2O = a UDP-3-O-[(3R)-3-hydroxyacyl]-alpha-D-glucosamine + acetate. It participates in glycolipid biosynthesis; lipid IV(A) biosynthesis; lipid IV(A) from (3R)-3-hydroxytetradecanoyl-[acyl-carrier-protein] and UDP-N-acetyl-alpha-D-glucosamine: step 2/6. Its function is as follows. Catalyzes the hydrolysis of UDP-3-O-myristoyl-N-acetylglucosamine to form UDP-3-O-myristoylglucosamine and acetate, the committed step in lipid A biosynthesis. The chain is UDP-3-O-acyl-N-acetylglucosamine deacetylase from Campylobacter jejuni subsp. jejuni serotype O:6 (strain 81116 / NCTC 11828).